We begin with the raw amino-acid sequence, 238 residues long: Pyridoxine 5'-phosphate synthase (238 aa).

3-amino-2-oxopropyl phosphate is bound at residue Asn-7. Residue 9–10 (DH) participates in 1-deoxy-D-xylulose 5-phosphate binding. Arg-18 contacts 3-amino-2-oxopropyl phosphate. Catalysis depends on His-43, which acts as the Proton acceptor. 2 residues coordinate 1-deoxy-D-xylulose 5-phosphate: Arg-45 and His-50. Glu-70 functions as the Proton acceptor in the catalytic mechanism. Thr-100 provides a ligand contact to 1-deoxy-D-xylulose 5-phosphate. The Proton donor role is filled by His-190. 3-amino-2-oxopropyl phosphate-binding positions include Gly-191 and 212–213 (GH).

The protein belongs to the PNP synthase family. In terms of assembly, homooctamer; tetramer of dimers.

It localises to the cytoplasm. The enzyme catalyses 3-amino-2-oxopropyl phosphate + 1-deoxy-D-xylulose 5-phosphate = pyridoxine 5'-phosphate + phosphate + 2 H2O + H(+). It functions in the pathway cofactor biosynthesis; pyridoxine 5'-phosphate biosynthesis; pyridoxine 5'-phosphate from D-erythrose 4-phosphate: step 5/5. Its function is as follows. Catalyzes the complicated ring closure reaction between the two acyclic compounds 1-deoxy-D-xylulose-5-phosphate (DXP) and 3-amino-2-oxopropyl phosphate (1-amino-acetone-3-phosphate or AAP) to form pyridoxine 5'-phosphate (PNP) and inorganic phosphate. The sequence is that of Pyridoxine 5'-phosphate synthase from Prochlorococcus marinus (strain MIT 9312).